We begin with the raw amino-acid sequence, 1080 residues long: Ubiquitin carboxyl-terminal hydrolase 8 (1080 aa).

In terms of domain architecture, MIT spans 33–116; it reads TKNYIHSAQK…ESLKLRYEEA (84 aa). Basic and acidic residues predominate over residues 119–173; the sequence is RKQLEEKDRREEEQLQQQKRQEMGREDSGAAAKRSVENLLDSKTKTQRINGEKSE. The segment at 119-176 is disordered; the sequence is RKQLEEKDRREEEQLQQQKRQEMGREDSGAAAKRSVENLLDSKTKTQRINGEKSEGAA. Residue Ser-160 is modified to Phosphoserine. The Rhodanese domain occupies 195–313; sequence KNTSLIIMDA…WLLCYPQFTT (119 aa). Low complexity predominate over residues 379–393; the sequence is ALAGPGAAPRAEASP. Disordered stretches follow at residues 379–455, 468–605, and 642–710; these read ALAG…TDEE, EKNK…RSEE, and PPEM…KPPC. Phosphoserine is present on Ser-392. Positions 405 to 413 match the SH3-binding motif; sequence PQVDRTKKP. The span at 417–427 shows a compositional bias: basic and acidic residues; the sequence is LPEDHRIKSEN. Position 446 is a phosphoserine (Ser-446). Basic and acidic residues-rich tracts occupy residues 468–535, 549–577, and 593–605; these read EKNK…RELS, SKSEHEASDAKVPVEGKRCPTSEAQKRPA, and AQREPLTRARSEE. Thr-569 is subject to Phosphothreonine. Polar residues predominate over residues 678-688; the sequence is SYSSPDITQAL. Phosphoserine occurs at positions 680 and 681. Residues 739–1071 form the USP domain; that stretch reads TGLRNLGNTC…AAYILFYTSL (333 aa). Cys-748 functions as the Nucleophile in the catalytic mechanism. The residue at position 907 (Thr-907) is a Phosphothreonine. His-1029 acts as the Proton acceptor in catalysis.

The protein belongs to the peptidase C19 family. In terms of assembly, forms a ternary complex with RNF128 and OTUB1. Interacts (via C-terminal UCH catalytic domain) with OTUB1 isoform 1. Interacts with STAM2 (via SH3 domain). Interacts with DNAJB3, EGFR, EPS15, RASGRF1, RNF41, YWHAE, YWHAG and YWHAZ. Interacts with NBR1, RASGRF1, RNF41 and IST1. Associates with the ESCRT-0 complex and with microtubules. Interacts with BIRC6/bruce and KIF23/MKLP1. Post-translationally, phosphorylation of Ser-680 is essential for interaction with YWHAE and for cytosol localization. Undergoes dephosphorylation at Ser-680 in the M phase. Tyrosine-phosphorylated in its N-terminal half in an EGFR-dependent manner. Ubiquitinated. Inactive form is mostly monoubiquitinated, but polyubiquitination happens too. Ubiquitination is increased in EGF-stimulated cells. Ubiquitination of active form is undetectable, suggesting a possibility that USP8 deubiquitinates itself, thereby regulating its own function. Highly expressed in testis. Expressed at intermediate level in brain.

The protein resides in the cytoplasm. It localises to the nucleus. It is found in the endosome membrane. The protein localises to the cell membrane. It carries out the reaction Thiol-dependent hydrolysis of ester, thioester, amide, peptide and isopeptide bonds formed by the C-terminal Gly of ubiquitin (a 76-residue protein attached to proteins as an intracellular targeting signal).. Hydrolase that can remove conjugated ubiquitin from proteins and therefore plays an important regulatory role at the level of protein turnover by preventing degradation. Converts both 'Lys-48' an 'Lys-63'-linked ubiquitin chains. Catalytic activity is enhanced in the M phase. Involved in cell proliferation. Required to enter into S phase in response to serum stimulation. May regulate T-cell anergy mediated by RNF128 via the formation of a complex containing RNF128 and OTUB1. Probably regulates the stability of STAM2 and RASGRF1. Regulates endosomal ubiquitin dynamics, cargo sorting, membrane traffic at early endosomes, and maintenance of ESCRT-0 stability. The level of protein ubiquitination on endosomes is essential for maintaining the morphology of the organelle. Deubiquitinates EPS15 and controls tyrosine kinase stability. Removes conjugated ubiquitin from EGFR thus regulating EGFR degradation and downstream MAPK signaling. Involved in acrosome biogenesis through interaction with the spermatid ESCRT-0 complex and microtubules. Deubiquitinates BIRC6/bruce and KIF23/MKLP1. Deubiquitinates BACE1 which inhibits BACE1 lysosomal degradation and modulates BACE-mediated APP cleavage and amyloid-beta formation. This Mus musculus (Mouse) protein is Ubiquitin carboxyl-terminal hydrolase 8.